A 171-amino-acid chain; its full sequence is 3-hydroxydecanoyl-[acyl-carrier-protein] dehydratase (171 aa).

The active site involves His-70.

This sequence belongs to the thioester dehydratase family. FabA subfamily. As to quaternary structure, homodimer.

It is found in the cytoplasm. It carries out the reaction a (3R)-hydroxyacyl-[ACP] = a (2E)-enoyl-[ACP] + H2O. It catalyses the reaction (3R)-hydroxydecanoyl-[ACP] = (2E)-decenoyl-[ACP] + H2O. The enzyme catalyses (2E)-decenoyl-[ACP] = (3Z)-decenoyl-[ACP]. It participates in lipid metabolism; fatty acid biosynthesis. Its function is as follows. Necessary for the introduction of cis unsaturation into fatty acids. Catalyzes the dehydration of (3R)-3-hydroxydecanoyl-ACP to E-(2)-decenoyl-ACP and then its isomerization to Z-(3)-decenoyl-ACP. Can catalyze the dehydratase reaction for beta-hydroxyacyl-ACPs with saturated chain lengths up to 16:0, being most active on intermediate chain length. The polypeptide is 3-hydroxydecanoyl-[acyl-carrier-protein] dehydratase (Pseudoalteromonas translucida (strain TAC 125)).